Reading from the N-terminus, the 124-residue chain is Urease subunit beta (124 aa).

The protein belongs to the urease beta subunit family. Heterotrimer of UreA (gamma), UreB (beta) and UreC (alpha) subunits. Three heterotrimers associate to form the active enzyme.

The protein resides in the cytoplasm. It catalyses the reaction urea + 2 H2O + H(+) = hydrogencarbonate + 2 NH4(+). The protein operates within nitrogen metabolism; urea degradation; CO(2) and NH(3) from urea (urease route): step 1/1. This is Urease subunit beta from Halalkalibacterium halodurans (strain ATCC BAA-125 / DSM 18197 / FERM 7344 / JCM 9153 / C-125) (Bacillus halodurans).